The sequence spans 182 residues: Orotate phosphoribosyltransferase (182 aa).

5-phospho-alpha-D-ribose 1-diphosphate is bound by residues Arg91, Lys92, Lys95, His97, and 117–125; that span reads EDVTTTGGS. Residues Thr121 and Arg149 each coordinate orotate.

The protein belongs to the purine/pyrimidine phosphoribosyltransferase family. PyrE subfamily. As to quaternary structure, homodimer. The cofactor is Mg(2+).

The enzyme catalyses orotidine 5'-phosphate + diphosphate = orotate + 5-phospho-alpha-D-ribose 1-diphosphate. It functions in the pathway pyrimidine metabolism; UMP biosynthesis via de novo pathway; UMP from orotate: step 1/2. Catalyzes the transfer of a ribosyl phosphate group from 5-phosphoribose 1-diphosphate to orotate, leading to the formation of orotidine monophosphate (OMP). The chain is Orotate phosphoribosyltransferase from Pyrococcus abyssi (strain GE5 / Orsay).